Consider the following 1073-residue polypeptide: Guanylyl cyclase C (1073 aa).

The N-terminal stretch at 1–23 (MKTPLLALALWSLLLQLGLTFWP) is a signal peptide. Topologically, residues 24–433 (SSVSQNCHNG…IPGRGPQILM (410 aa)) are extracellular. Residues Asn-32, Asn-43, Asn-79, Asn-195, Asn-284, Asn-307, and Asn-402 are each glycosylated (N-linked (GlcNAc...) asparagine). Residues 434 to 454 (IAVFTLTGTIVLLLLIALLVL) traverse the membrane as a helical segment. Topologically, residues 455-1073 (RKYKREYALR…NTTDNESTHF (619 aa)) are cytoplasmic. Residues 489-749 (LKIDDDRRRD…KIENTLAKIF (261 aa)) enclose the Protein kinase domain. One can recognise a Guanylate cyclase domain in the interval 824–954 (TIYFSDIVGF…DTVNTASRME (131 aa)).

It belongs to the adenylyl cyclase class-4/guanylyl cyclase family. As to quaternary structure, homotrimer. Interacts via its C-terminal region with NHERF4. Interacts with the lectin chaperone VIP36. In terms of processing, glycosylation at Asn-79 is required for interaction with VIP36 while glycosylation at Asn-402 modulates ligand-mediated GC-C activation.

The protein localises to the cell membrane. Its subcellular location is the endoplasmic reticulum membrane. It catalyses the reaction GTP = 3',5'-cyclic GMP + diphosphate. Functionally, guanylyl cyclase that catalyzes synthesis of cyclic GMP (cGMP) from GTP. The protein is Guanylyl cyclase C (GUCY2C) of Sus scrofa (Pig).